The primary structure comprises 149 residues: SsrA-binding protein (149 aa).

This sequence belongs to the SmpB family.

It localises to the cytoplasm. In terms of biological role, required for rescue of stalled ribosomes mediated by trans-translation. Binds to transfer-messenger RNA (tmRNA), required for stable association of tmRNA with ribosomes. tmRNA and SmpB together mimic tRNA shape, replacing the anticodon stem-loop with SmpB. tmRNA is encoded by the ssrA gene; the 2 termini fold to resemble tRNA(Ala) and it encodes a 'tag peptide', a short internal open reading frame. During trans-translation Ala-aminoacylated tmRNA acts like a tRNA, entering the A-site of stalled ribosomes, displacing the stalled mRNA. The ribosome then switches to translate the ORF on the tmRNA; the nascent peptide is terminated with the 'tag peptide' encoded by the tmRNA and targeted for degradation. The ribosome is freed to recommence translation, which seems to be the essential function of trans-translation. The chain is SsrA-binding protein from Wolbachia pipientis subsp. Culex pipiens (strain wPip).